We begin with the raw amino-acid sequence, 225 residues long: PKHD-type hydroxylase YbiX (225 aa).

A Fe2OG dioxygenase domain is found at threonine 78–serine 177. The Fe cation site is built by histidine 96, aspartate 98, and histidine 158. Residue arginine 168 participates in 2-oxoglutarate binding.

Fe(2+) is required as a cofactor. It depends on L-ascorbate as a cofactor.

The polypeptide is PKHD-type hydroxylase YbiX (Escherichia coli (strain K12 / DH10B)).